Consider the following 751-residue polypeptide: MEHIYQYTWIIPFIPLTVPLLIGAGLIIFPTTTKNLRRMWAFPSILLLSLVMLFSTKLSIQQINSHYIYQSVWSWTINNDFSLEFGYLVDPLTSIMSMLITTVGILVLIYSDNYMVHDQGYLRFFAYLSFFNTSMLGLVTSSNFIQIYIFWELVGMCSYLLIGFWFTRPIAANACQKAFVTNRVGDFGLLLGILGLYWLTGSFEFRDLFEIFNTLIYNNEVHFLVGTVCTFLLFAGAVAKSAQFPLHVWLPDAMEGPTPISALIHAATMVAAGIFLVARLFPLLIVTPFILNLIALVGIITLFLGATLASCSKDIKRGLAYSTMSQLGYMMLALGMGSYRAALFHLITHAYSKALLFLGSGCVIHSMEAIVGYSPDKSQNMVFMGGLKKHVPITKTAFLLGTLSLSGIPPLACFWSKDEIINDTWLYSPIFAIISWATVGFTAFYMFRIYLLTFEGHLNVHFQNYNGKKSSSVYSISLWGHEGLKPINKNLSLFTLLPIKNNESFYKNPHGDIKKTIQSFLITNNCDNKKIVPYPHESGNTMLFPLLVLIIFTGVIGFIGIPFDQENMDFDILSSWLTPSVNLLHLKLNNKNSFDWSEFLTNATLSVSIAYSGIVLASFLYKPIYSYSSLQNFALINLFAKRHPKRFFSDKIKNVIYDWAHHRGYIDAFYTRYIIRSVRGLSQFINFFDRRVIDGIPNGLGVTSFFVGEGLKYVGGGRISSYLFLYLLYASIFLLIYYFDFTNININFTDQ.

16 consecutive transmembrane segments (helical) span residues 9 to 29 (WIIP…LIIF), 40 to 60 (WAFP…KLSI), 89 to 109 (VDPL…LVLI), 125 to 145 (FAYL…SNFI), 147 to 167 (IYIF…FWFT), 185 to 205 (GDFG…SFEF), 219 to 239 (NEVH…GAVA), 258 to 278 (TPIS…FLVA), 280 to 300 (LFPL…VGII), 327 to 347 (LGYM…FHLI), 354 to 374 (ALLF…VGYS), 396 to 416 (TAFL…CFWS), 425 to 445 (WLYS…TAFY), 543 to 563 (LFPL…GIPF), 599 to 619 (FLTN…LASF), and 719 to 739 (ISSY…IYYF).

It belongs to the complex I subunit 5 family. NDH is composed of at least 16 different subunits, 5 of which are encoded in the nucleus.

Its subcellular location is the plastid. The protein localises to the chloroplast thylakoid membrane. The catalysed reaction is a plastoquinone + NADH + (n+1) H(+)(in) = a plastoquinol + NAD(+) + n H(+)(out). The enzyme catalyses a plastoquinone + NADPH + (n+1) H(+)(in) = a plastoquinol + NADP(+) + n H(+)(out). In terms of biological role, NDH shuttles electrons from NAD(P)H:plastoquinone, via FMN and iron-sulfur (Fe-S) centers, to quinones in the photosynthetic chain and possibly in a chloroplast respiratory chain. The immediate electron acceptor for the enzyme in this species is believed to be plastoquinone. Couples the redox reaction to proton translocation, and thus conserves the redox energy in a proton gradient. The chain is NAD(P)H-quinone oxidoreductase subunit 5, chloroplastic (ndhF) from Fagopyrum esculentum subsp. ancestrale (Wild buckwheat).